The following is a 385-amino-acid chain: Major capsid protein (385 aa).

Positions 1–57 (MSELALIQKAIEESQQKMTQLFDAQKAEIESTGQVSKQLQSDLMKVQEELTKSGTRL) form a coiled coil. An Isoaspartyl lysine isopeptide (Lys-Asn) (interchain with N-356) cross-link involves residue K169. N356 is covalently cross-linked (Isoaspartyl lysine isopeptide (Asn-Lys) (interchain with K-169)).

This sequence belongs to the HK97 phage major capsid protein family. In terms of assembly, homopentamer and homohexamer; isoaspartyl lysine isopeptide-linked. Interacts with the portal protein. The scaffolding domain delta is cleaved by the viral protease and lost after assembly. Post-translationally, the major capsid proteins are covalently cross-linked.

Its subcellular location is the virion. In terms of biological role, assembles to form an icosahedral capsid of 66 nm, with a T=7 laevo symmetry. Responsible for its self-assembly into a procapsid. The phage does not need to encode a separate scaffolfing protein because its capsid protein contains the delta domain that carries that function. The sequence is that of Major capsid protein (5) from Escherichia coli (Bacteriophage HK97).